A 383-amino-acid polypeptide reads, in one-letter code: Hydroxymethylglutaryl-CoA synthase (383 aa).

Aspartate 29 is a binding site for (3S)-3-hydroxy-3-methylglutaryl-CoA. Catalysis depends on glutamate 79, which acts as the Proton donor/acceptor. Residues cysteine 111, threonine 152, serine 201, histidine 233, lysine 242, asparagine 275, and serine 308 each coordinate (3S)-3-hydroxy-3-methylglutaryl-CoA. Residue cysteine 111 is the Acyl-thioester intermediate of the active site. The active-site Proton donor/acceptor is histidine 233.

This sequence belongs to the thiolase-like superfamily. HMG-CoA synthase family. As to quaternary structure, homodimer.

The catalysed reaction is acetoacetyl-CoA + acetyl-CoA + H2O = (3S)-3-hydroxy-3-methylglutaryl-CoA + CoA + H(+). It functions in the pathway metabolic intermediate biosynthesis; (R)-mevalonate biosynthesis; (R)-mevalonate from acetyl-CoA: step 2/3. Is sensitive to feedback substrate inhibition by acetoacetyl-CoA. Is inactivated by hymeglusin, which also blocks the growth of E.faecalis, indicating the critical role that the mevalonate pathway plays in isoprenoid biosynthesis. Its function is as follows. Catalyzes the condensation of acetyl-CoA with acetoacetyl-CoA to form 3-hydroxy-3-methylglutaryl-CoA (HMG-CoA). Functions in the mevalonate (MVA) pathway leading to isopentenyl diphosphate (IPP), a key precursor for the biosynthesis of isoprenoid compounds. The protein is Hydroxymethylglutaryl-CoA synthase (mvaS) of Enterococcus faecalis (Streptococcus faecalis).